The following is a 128-amino-acid chain: uncharacterized protein (128 aa).

The 69-residue stretch at 6-74 folds into the S1 motif domain; that stretch reads GSKLQGKITG…KDGKIGLSIK (69 aa). Positions 72-128 are disordered; that stretch reads SIKKAKDRPQARPRNDFRPKESFEQKMNKFLKDSEDRLSSLKRNTESKRGGRGARRG. The segment covering 78-120 has biased composition (basic and acidic residues); sequence DRPQARPRNDFRPKESFEQKMNKFLKDSEDRLSSLKRNTESKR.

It belongs to the peptidase U57 family.

This is an uncharacterized protein from Bacillus subtilis (strain 168).